Consider the following 252-residue polypeptide: 3-dehydroquinate dehydratase (252 aa).

Residues S21, 46 to 48 (EWR), and R82 each bind 3-dehydroquinate. The Proton donor/acceptor role is filled by H143. The active-site Schiff-base intermediate with substrate is K170. The 3-dehydroquinate site is built by R213, S232, and Q236.

Belongs to the type-I 3-dehydroquinase family. In terms of assembly, homodimer.

The catalysed reaction is 3-dehydroquinate = 3-dehydroshikimate + H2O. It participates in metabolic intermediate biosynthesis; chorismate biosynthesis; chorismate from D-erythrose 4-phosphate and phosphoenolpyruvate: step 3/7. Involved in the third step of the chorismate pathway, which leads to the biosynthesis of aromatic amino acids. Catalyzes the cis-dehydration of 3-dehydroquinate (DHQ) and introduces the first double bond of the aromatic ring to yield 3-dehydroshikimate. In Escherichia coli (strain SE11), this protein is 3-dehydroquinate dehydratase.